The sequence spans 198 residues: COMM domain-containing protein 9 (198 aa).

Ala-2 bears the N-acetylalanine mark. The region spanning 122–196 (RLVDLDWRVD…RIRDQLSAVA (75 aa)) is the COMM domain.

This sequence belongs to the COMM domain-containing protein 9 family. As to quaternary structure, component of the commander complex consisting of the CCC subcomplex and the retriever subcomplex. Component of the CCC (COMMD/CCDC22/CCDC93) subcomplex consisting of COMMD1, COMMD2, COMMD3, COMMD4, COMMD5, COMMD6, COMMD7, COMMD8, COMMD9, COMMD10, CCDC22 and CCDC93; within the complex forms a heterodimer with COMMD7. Interacts with RELB and NFKB1/p105. Interacts with CCDC22, CCDC93, SCNN1B, CUL1. In terms of tissue distribution, ubiquitous.

It localises to the nucleus. The protein localises to the cytoplasmic vesicle. In terms of biological role, scaffold protein in the commander complex that is essential for endosomal recycling of transmembrane cargos; the commander complex is composed of the CCC subcomplex and the retriever subcomplex. May modulate activity of cullin-RING E3 ubiquitin ligase (CRL) complexes. May down-regulate activation of NF-kappa-B. Modulates Na(+) transport in epithelial cells by regulation of apical cell surface expression of amiloride-sensitive sodium channel (ENaC) subunits. In Homo sapiens (Human), this protein is COMM domain-containing protein 9 (COMMD9).